We begin with the raw amino-acid sequence, 326 residues long: Ornithine carbamoyltransferase (326 aa).

Residues 57-60 (STRT), glutamine 84, arginine 108, and 135-138 (HPTQ) each bind carbamoyl phosphate. L-ornithine contacts are provided by residues asparagine 169, aspartate 233, and 237-238 (SM). Residue 275 to 276 (CL) coordinates carbamoyl phosphate.

This sequence belongs to the aspartate/ornithine carbamoyltransferase superfamily. OTCase family.

The protein resides in the cytoplasm. The catalysed reaction is carbamoyl phosphate + L-ornithine = L-citrulline + phosphate + H(+). The protein operates within amino-acid biosynthesis; L-arginine biosynthesis; L-arginine from L-ornithine and carbamoyl phosphate: step 1/3. In terms of biological role, reversibly catalyzes the transfer of the carbamoyl group from carbamoyl phosphate (CP) to the N(epsilon) atom of ornithine (ORN) to produce L-citrulline. The polypeptide is Ornithine carbamoyltransferase (Escherichia coli O6:K15:H31 (strain 536 / UPEC)).